We begin with the raw amino-acid sequence, 517 residues long: Beclin-1-like protein (517 aa).

Residues 76-106 (LPRHKPPQSQGIPPRPRGASSPQPDATQSGK) form a disordered region. The span at 95 to 105 (SSPQPDATQSG) shows a compositional bias: polar residues. The stretch at 172–266 (CLECMRVLSD…NRFNELEDRY (95 aa)) forms a coiled coil.

The protein belongs to the beclin family. As to quaternary structure, component of a phosphatidylinositol 3-kinase (PI3K) complex composed of ATG6, SH3P2 and FREE1. Interacts with SINAT1, SINAT2, SINAT5, SINAT6, TRAF1A and TRAF1B. Interacts with TUBB8/TUB8. Component of a complex made of VPS38/USL1 and PI3K main subunits such as VPS15, ATG6/VPS30 and VPS34. Binds directly to VPS38/USL1. Ubiquitinated. The interaction with SINAT1 or SINAT2, and the presence of TRAF1A/MUSE14 and TRAF1B/MUSE13, mediates its proteasome-dependent degradation. Highly expressed in mature pollen grains. Expressed in roots, leaves, stems, flowers and siliques.

The protein resides in the cytoplasm. The protein localises to the cytoskeleton. Functionally, required for normal plant development. Required for pollen germination. Required for autophagic activity. Required to limit the pathogen-associated cell death response. May be involved in vacuolar protein sorting. Binds to microtubules. May facilitate efficient recruitment of other ATG proteins to assemble scaffolds for autophagosome biogenesis. The protein is Beclin-1-like protein of Arabidopsis thaliana (Mouse-ear cress).